Consider the following 354-residue polypeptide: 3'-5' exonuclease (354 aa).

Residues 1–120 (MEKYLIKMPI…PSPEKEKPEK (120 aa)) form a disordered region. Composition is skewed to basic and acidic residues over residues 13–23 (KASEVPKDKAV), 36–50 (TKND…KENA), and 71–91 (KNLD…ENPP). Residues Ser104, Ser110, and Ser112 each carry the phosphoserine modification. Residues 146–314 (VLQWVEKQKD…GQVIYRELER (169 aa)) form the 3'-5' exonuclease domain. The Mg(2+) site is built by Asp163, Glu165, and Asp301.

It belongs to the WRNexo family.

The protein resides in the nucleus. Functionally, has exonuclease activity on both single-stranded and duplex templates bearing overhangs, but not blunt ended duplex DNA, and cleaves in a 3'-5' direction. Essential for the formation of DNA replication focal centers. Has an important role in maintaining genome stability. The protein is 3'-5' exonuclease of Drosophila erecta (Fruit fly).